The primary structure comprises 322 residues: DNA primase small subunit PriS (322 aa).

Catalysis depends on residues D86, D88, and D226.

Belongs to the eukaryotic-type primase small subunit family. Heterodimer of a small subunit (PriS) and a large subunit (PriL). The cofactor is Mg(2+). Mn(2+) serves as cofactor.

In terms of biological role, catalytic subunit of DNA primase, an RNA polymerase that catalyzes the synthesis of short RNA molecules used as primers for DNA polymerase during DNA replication. The small subunit contains the primase catalytic core and has DNA synthesis activity on its own. Binding to the large subunit stabilizes and modulates the activity, increasing the rate of DNA synthesis while decreasing the length of the DNA fragments, and conferring RNA synthesis capability. The DNA polymerase activity may enable DNA primase to also catalyze primer extension after primer synthesis. May also play a role in DNA repair. This Thermoplasma acidophilum (strain ATCC 25905 / DSM 1728 / JCM 9062 / NBRC 15155 / AMRC-C165) protein is DNA primase small subunit PriS.